The following is a 107-amino-acid chain: Essential MCU regulator, mitochondrial (107 aa).

The transit peptide at 1-47 directs the protein to the mitochondrion; it reads MASTAARRLAWVAVRPGALWSGPRGRRGGDVYTVPGSSGLSQVPSRS. Residues 48-65 lie on the Mitochondrial matrix side of the membrane; it reads VIVTRSGAILPKPVKMSF. A helical membrane pass occupies residues 66–85; the sequence is GLLRVFSIVIPFLYVGTLIS. Positions 81 to 85 match the GXXXX[G/A/S] motif; that stretch reads GTLIS. Topologically, residues 86–107 are mitochondrial intermembrane; sequence KNFAALLEEHDIFVPEDDDDDD.

The protein belongs to the SMDT1/EMRE family. In terms of assembly, component of the uniplex complex, composed of MCU, EMRE/SMDT1, MICU1 and MICU2 (or MICU3) in a 4:4:1:1 stoichiometry. The number of EMRE/SMDT1 molecules is hovewer variable, ranging from 1 to 4 copies per uniplex complex, leading to uniplex complexes with distinct gatekeeping profiles. Interacts (via its C-terminal poly-Asp tail) with MCUR1; the interaction is direct. Unprocessed form interacts (via transit peptide) with MAIP1. In terms of processing, undergoes proteolytic degradation in neurons: degraded by AFG3L2 and SPG7 before SMDT1/EMRE assembly with the uniporter complex, limiting the availability of SMDT1/EMRE for MCU assembly and promoting efficient assembly of gatekeeper subunits with MCU. In terms of tissue distribution, widely expressed.

The protein localises to the mitochondrion inner membrane. Essential regulatory subunit of the mitochondrial calcium uniporter complex (uniplex), a complex that mediates calcium uptake into mitochondria. Required to bridge the calcium-sensing proteins MICU1 with the calcium-conducting subunit MCU. Acts by mediating activation of MCU and retention of MICU1 to the MCU pore, in order to ensure tight regulation of the uniplex complex and appropriate responses to intracellular calcium signaling. This Mus musculus (Mouse) protein is Essential MCU regulator, mitochondrial.